We begin with the raw amino-acid sequence, 192 residues long: Acireductone dioxygenase 2 (192 aa).

Fe(2+) contacts are provided by His99, His101, Glu105, and His144. Positions 99, 101, 105, and 144 each coordinate Ni(2+).

The protein belongs to the acireductone dioxygenase (ARD) family. The cofactor is Fe(2+). Requires Ni(2+) as cofactor.

Its subcellular location is the cytoplasm. The protein resides in the nucleus. The enzyme catalyses 1,2-dihydroxy-5-(methylsulfanyl)pent-1-en-3-one + O2 = 4-methylsulfanyl-2-oxobutanoate + formate + 2 H(+). The catalysed reaction is 1,2-dihydroxy-5-(methylsulfanyl)pent-1-en-3-one + O2 = 3-(methylsulfanyl)propanoate + CO + formate + 2 H(+). The protein operates within amino-acid biosynthesis; L-methionine biosynthesis via salvage pathway; L-methionine from S-methyl-5-thio-alpha-D-ribose 1-phosphate: step 5/6. In terms of biological role, catalyzes 2 different reactions between oxygen and the acireductone 1,2-dihydroxy-3-keto-5-methylthiopentene (DHK-MTPene) depending upon the metal bound in the active site. Fe-containing acireductone dioxygenase (Fe-ARD) produces formate and 2-keto-4-methylthiobutyrate (KMTB), the alpha-ketoacid precursor of methionine in the methionine recycle pathway. Ni-containing acireductone dioxygenase (Ni-ARD) produces methylthiopropionate, carbon monoxide and formate, and does not lie on the methionine recycle pathway. This Arabidopsis thaliana (Mouse-ear cress) protein is Acireductone dioxygenase 2 (ARD2).